The primary structure comprises 860 residues: Leucine--tRNA ligase (860 aa).

Positions 42 to 52 match the 'HIGH' region motif; that stretch reads PYPSGRLHMGH. The 'KMSKS' region signature appears at 619–623; it reads KMSKS. Lys622 contacts ATP.

This sequence belongs to the class-I aminoacyl-tRNA synthetase family.

It localises to the cytoplasm. The enzyme catalyses tRNA(Leu) + L-leucine + ATP = L-leucyl-tRNA(Leu) + AMP + diphosphate. This chain is Leucine--tRNA ligase, found in Escherichia coli O45:K1 (strain S88 / ExPEC).